The sequence spans 184 residues: Elongation factor P (184 aa).

Belongs to the elongation factor P family.

Its subcellular location is the cytoplasm. The protein operates within protein biosynthesis; polypeptide chain elongation. Functionally, involved in peptide bond synthesis. Stimulates efficient translation and peptide-bond synthesis on native or reconstituted 70S ribosomes in vitro. Probably functions indirectly by altering the affinity of the ribosome for aminoacyl-tRNA, thus increasing their reactivity as acceptors for peptidyl transferase. In Acidovorax ebreus (strain TPSY) (Diaphorobacter sp. (strain TPSY)), this protein is Elongation factor P.